Reading from the N-terminus, the 90-residue chain is UPF0367 protein PMT9312_0127 (90 aa).

It belongs to the UPF0367 family.

The chain is UPF0367 protein PMT9312_0127 from Prochlorococcus marinus (strain MIT 9312).